The sequence spans 338 residues: Ketol-acid reductoisomerase (NADP(+)) (338 aa).

The KARI N-terminal Rossmann domain maps to 1–181; sequence MRVFYDKDCD…GGGRTGIIET (181 aa). NADP(+)-binding positions include 24–27, Arg-47, Ser-50, Thr-52, and 82–85; these read YGSQ and DEFQ. Residue His-107 is part of the active site. Gly-133 serves as a coordination point for NADP(+). The KARI C-terminal knotted domain maps to 182–327; the sequence is TFKDETETDL…EKLRAMMPWI (146 aa). The Mg(2+) site is built by Asp-190, Glu-194, Glu-226, and Glu-230. Ser-251 provides a ligand contact to substrate.

This sequence belongs to the ketol-acid reductoisomerase family. Requires Mg(2+) as cofactor.

The catalysed reaction is (2R)-2,3-dihydroxy-3-methylbutanoate + NADP(+) = (2S)-2-acetolactate + NADPH + H(+). It carries out the reaction (2R,3R)-2,3-dihydroxy-3-methylpentanoate + NADP(+) = (S)-2-ethyl-2-hydroxy-3-oxobutanoate + NADPH + H(+). Its pathway is amino-acid biosynthesis; L-isoleucine biosynthesis; L-isoleucine from 2-oxobutanoate: step 2/4. The protein operates within amino-acid biosynthesis; L-valine biosynthesis; L-valine from pyruvate: step 2/4. Functionally, involved in the biosynthesis of branched-chain amino acids (BCAA). Catalyzes an alkyl-migration followed by a ketol-acid reduction of (S)-2-acetolactate (S2AL) to yield (R)-2,3-dihydroxy-isovalerate. In the isomerase reaction, S2AL is rearranged via a Mg-dependent methyl migration to produce 3-hydroxy-3-methyl-2-ketobutyrate (HMKB). In the reductase reaction, this 2-ketoacid undergoes a metal-dependent reduction by NADPH to yield (R)-2,3-dihydroxy-isovalerate. This Pseudomonas aeruginosa (strain LESB58) protein is Ketol-acid reductoisomerase (NADP(+)).